The chain runs to 375 residues: Tyrosine--tRNA ligase (375 aa).

Positions 37, 168, 172, 175, and 190 each coordinate L-tyrosine. Positions 251-255 match the 'KMSKS' region motif; it reads KMSKS. ATP is bound at residue lysine 254.

Belongs to the class-I aminoacyl-tRNA synthetase family. TyrS type 4 subfamily. In terms of assembly, homodimer.

Its subcellular location is the cytoplasm. It catalyses the reaction tRNA(Tyr) + L-tyrosine + ATP = L-tyrosyl-tRNA(Tyr) + AMP + diphosphate + H(+). Its function is as follows. Catalyzes the attachment of tyrosine to tRNA(Tyr) in a two-step reaction: tyrosine is first activated by ATP to form Tyr-AMP and then transferred to the acceptor end of tRNA(Tyr). The polypeptide is Tyrosine--tRNA ligase (Pyrococcus abyssi (strain GE5 / Orsay)).